A 517-amino-acid polypeptide reads, in one-letter code: Splicing factor U2AF 59 kDa subunit (517 aa).

Residues 1-13 (MDLSSRLSSGSSR) show a composition bias toward low complexity. The disordered stretch occupies residues 1–112 (MDLSSRLSSG…PSRERSVRSI (112 aa)). The span at 20–89 (DYRDEEPRRE…RRYDDYEPRS (70 aa)) shows a compositional bias: basic and acidic residues. 2 consecutive RRM domains span residues 310–388 (DKIY…FACV) and 418–509 (RVLQ…FYGE).

This sequence belongs to the splicing factor SR family. In terms of assembly, forms a heterodimer with the U2AF small subunit. Can also form a homodimer. U2AF large subunit (U2AF59), U2AF small subunit (U2AF23) and SF1 (bpb1) interact to form a complex required for complex A formation. Interacts with wat1/pop3.

It is found in the nucleus. Necessary for the splicing of pre-mRNA. The SF1-U2AF59-U2AF23 complex has a role in the recognition of the branch site (5'-UACUAAC-3'), the pyrimidine tract and the 3'-splice site at the 3'-end of introns. In Schizosaccharomyces pombe (strain 972 / ATCC 24843) (Fission yeast), this protein is Splicing factor U2AF 59 kDa subunit (prp2).